The primary structure comprises 374 residues: Phospho-2-dehydro-3-deoxyheptonate aldolase AMT16 (374 aa).

The protein belongs to the class-I DAHP synthase family.

The enzyme catalyses D-erythrose 4-phosphate + phosphoenolpyruvate + H2O = 7-phospho-2-dehydro-3-deoxy-D-arabino-heptonate + phosphate. It participates in mycotoxin biosynthesis. Its function is as follows. Nonribosomal peptide synthetase; part of the gene clusters that mediate the biosynthesis of AM-toxins, host-selective toxins (HSTs) causing Alternaria blotch on apple, a worldwide distributed disease. AM-toxins are cyclic depsipeptides containing the 3 residues 2-hydroxy-isovaleric acid (2-HIV), dehydroalanine, L-alanine which are common for all 3 AM-toxins I to III. The fourth precursor is L-alpha-amino-methoxyphenyl-valeric acid (L-Amv) for AM-toxin I, L-alpha-amino-phenyl-valeric acid (L-Apv) for AM-toxin II, and L-alpha-amino-hydroxyphenyl-valeric acid (L-Ahv) for AM-toxin III. AM-toxins have two target sites for affecting susceptible apple cells; they cause invagination of the plasma membrane and electrolyte loss and chloroplast disorganization. The non-ribosomal peptide synthetase AMT1 contains 4 catalytic modules and is responsible for activation of each residue in AM-toxin. The aldo-keto reductase AMT2 catalyzes the conversion of 2-keto-isovaleric acid (2-KIV) to 2-hydroxy-isovaleric acid (2-HIV), one of the precursor residues incorporated by AMT1 during AM-toxin biosynthesis, by reduction of its ketone to an alcohol. The cytochrome P450 monooxygenase AMT3 and the thioesterase AMT4 are also important for AM-toxin production, but their exact function within the AM-toxin biosynthesis are not known yet. Up to 21 proteins (including AMT1 to AMT4) are predicted to be involved in AM-toxin biosynthesis since their expression ishighly up-regulated in AM-toxin-producing cultures. The polypeptide is Phospho-2-dehydro-3-deoxyheptonate aldolase AMT16 (Alternaria alternata (Alternaria rot fungus)).